The primary structure comprises 695 residues: Elongation factor G (695 aa).

Residues 8 to 282 form the tr-type G domain; it reads EKTRNIGIMA…AVLDYLPAPT (275 aa). GTP contacts are provided by residues 17 to 24, 81 to 85, and 135 to 138; these read AHIDAGKT, DTPGH, and NKMD.

It belongs to the TRAFAC class translation factor GTPase superfamily. Classic translation factor GTPase family. EF-G/EF-2 subfamily.

It localises to the cytoplasm. Catalyzes the GTP-dependent ribosomal translocation step during translation elongation. During this step, the ribosome changes from the pre-translocational (PRE) to the post-translocational (POST) state as the newly formed A-site-bound peptidyl-tRNA and P-site-bound deacylated tRNA move to the P and E sites, respectively. Catalyzes the coordinated movement of the two tRNA molecules, the mRNA and conformational changes in the ribosome. This chain is Elongation factor G, found in Listeria monocytogenes serotype 4b (strain CLIP80459).